A 512-amino-acid polypeptide reads, in one-letter code: Kynurenine 3-monooxygenase (512 aa).

This sequence belongs to the aromatic-ring hydroxylase family. KMO subfamily. Requires FAD as cofactor.

The protein resides in the mitochondrion outer membrane. It catalyses the reaction L-kynurenine + NADPH + O2 + H(+) = 3-hydroxy-L-kynurenine + NADP(+) + H2O. The protein operates within cofactor biosynthesis; NAD(+) biosynthesis; quinolinate from L-kynurenine: step 1/3. Its function is as follows. Catalyzes the hydroxylation of L-kynurenine (L-Kyn) to form 3-hydroxy-L-kynurenine (L-3OHKyn). Required for synthesis of quinolinic acid. In Neosartorya fischeri (strain ATCC 1020 / DSM 3700 / CBS 544.65 / FGSC A1164 / JCM 1740 / NRRL 181 / WB 181) (Aspergillus fischerianus), this protein is Kynurenine 3-monooxygenase (bna4).